The chain runs to 394 residues: Probable glycosyltransferase FCK3 (394 aa).

It belongs to the afumC glycosyltransferase family.

It participates in secondary metabolite biosynthesis. In terms of biological role, probable glycosyl transferase; part of the gene cluster that mediates the biosynthesis of cytokinins such as fusatin, fusatinic acids or 8-oxofusatin, known for their growth promoting and anti-senescence activities toward host plants. FCK1 is a bifunctional enzyme that performs the first steps in the biosynthesis of Fusarium cytokinins. It first condenses adenosine monophosphate (AMP) with dimethylallyl diphosphate (DMAPP) to yield isoprenyl adenosine monophosphate. It then catalyzes the removal of the phosphoribose to produce isopentenylaldehyde. The cytochrome P450 monooxygenase then converts isopentenylaldehyde to trans-zeatin. A condensation step converts trans-zeatin to fusatin which is further modified to produce fusatinic acid. The mechanism for oxidation of fusatin to fusatinic acid remains unknown. 8-oxofusatin could be produced through several pathways, via direct oxygenation of fusatin, or via the 8-oxo-pentenyladenine intermediate which itself must arise from either the prenylation of 8-oxo-AMP by FCK1 and/or oxygenation of isopentenylaldehyde. Both the FCK3 and FCK4 enzymes act downstream of the identified cytokinins to produce yet unidentified compounds. The polypeptide is Probable glycosyltransferase FCK3 (Fusarium pseudograminearum (strain CS3096) (Wheat and barley crown-rot fungus)).